Reading from the N-terminus, the 25-residue chain is Tubulin alpha chain (25 aa).

Glutamine 11 serves as a coordination point for GTP.

It belongs to the tubulin family. As to quaternary structure, dimer of alpha and beta chains. A typical microtubule is a hollow water-filled tube with an outer diameter of 25 nm and an inner diameter of 15 nM. Alpha-beta heterodimers associate head-to-tail to form protofilaments running lengthwise along the microtubule wall with the beta-tubulin subunit facing the microtubule plus end conferring a structural polarity. Microtubules usually have 13 protofilaments but different protofilament numbers can be found in some organisms and specialized cells. Mg(2+) is required as a cofactor.

The protein localises to the cytoplasm. It is found in the cytoskeleton. The catalysed reaction is GTP + H2O = GDP + phosphate + H(+). Its function is as follows. Tubulin is the major constituent of microtubules, a cylinder consisting of laterally associated linear protofilaments composed of alpha- and beta-tubulin heterodimers. Microtubules grow by the addition of GTP-tubulin dimers to the microtubule end, where a stabilizing cap forms. Below the cap, tubulin dimers are in GDP-bound state, owing to GTPase activity of alpha-tubulin. This chain is Tubulin alpha chain, found in Leptomonas seymouri.